The primary structure comprises 513 residues: Lysine--tRNA ligase (513 aa).

Mg(2+)-binding residues include glutamate 423 and glutamate 430.

This sequence belongs to the class-II aminoacyl-tRNA synthetase family. Homodimer. It depends on Mg(2+) as a cofactor.

It is found in the cytoplasm. It catalyses the reaction tRNA(Lys) + L-lysine + ATP = L-lysyl-tRNA(Lys) + AMP + diphosphate. The sequence is that of Lysine--tRNA ligase from Anaeromyxobacter dehalogenans (strain 2CP-1 / ATCC BAA-258).